The sequence spans 232 residues: Zinc-finger homeodomain protein 5 (232 aa).

Residues 1 to 11 are compositionally biased toward acidic residues; that stretch reads MELSEHEEDAG. The interval 1–25 is disordered; it reads MELSEHEEDAGDVGGGCSSPPTPPH. Residues 40–86 form a ZF-HD dimerization-type; degenerate zinc finger; that stretch reads YHECLRNHAAASGGHVVDGCGEFMPASTEEPLACAACGCHRSFHRRD. Positions 126-170 are disordered; that stretch reads GLPFPGYGTPSGGTGTTTASSSDERLRPSPVQPRRRSRTTFTREQ. The homeobox DNA-binding region spans 159–222; it reads RRRSRTTFTR…NNKHSFKQKQ (64 aa).

In terms of assembly, homo- and heterodimer with other ZFHD proteins.

Its subcellular location is the nucleus. In terms of biological role, putative transcription factor. This Oryza sativa subsp. indica (Rice) protein is Zinc-finger homeodomain protein 5 (ZHD5).